The chain runs to 403 residues: Chorismate synthase (403 aa).

NADP(+)-binding residues include arginine 40 and arginine 46. FMN is bound by residues arginine 140 to serine 142 and glutamine 261 to alanine 262. Residues arginine 277–asparagine 298 show a composition bias toward basic and acidic residues. The tract at residues arginine 277–methionine 307 is disordered. FMN is bound by residues glycine 305, lysine 320–threonine 324, and arginine 346.

This sequence belongs to the chorismate synthase family. In terms of assembly, homotetramer. FMNH2 is required as a cofactor.

The enzyme catalyses 5-O-(1-carboxyvinyl)-3-phosphoshikimate = chorismate + phosphate. The protein operates within metabolic intermediate biosynthesis; chorismate biosynthesis; chorismate from D-erythrose 4-phosphate and phosphoenolpyruvate: step 7/7. Catalyzes the anti-1,4-elimination of the C-3 phosphate and the C-6 proR hydrogen from 5-enolpyruvylshikimate-3-phosphate (EPSP) to yield chorismate, which is the branch point compound that serves as the starting substrate for the three terminal pathways of aromatic amino acid biosynthesis. This reaction introduces a second double bond into the aromatic ring system. This Corynebacterium aurimucosum (strain ATCC 700975 / DSM 44827 / CIP 107346 / CN-1) (Corynebacterium nigricans) protein is Chorismate synthase.